A 192-amino-acid polypeptide reads, in one-letter code: Pyridoxal 5'-phosphate synthase subunit PdxT (192 aa).

53–55 (GES) contributes to the L-glutamine binding site. Cys85 (nucleophile) is an active-site residue. L-glutamine is bound by residues Arg112 and 140-141 (IR). Residues His176 and Glu178 each act as charge relay system in the active site.

It belongs to the glutaminase PdxT/SNO family. In terms of assembly, in the presence of PdxS, forms a dodecamer of heterodimers. Only shows activity in the heterodimer.

It catalyses the reaction aldehydo-D-ribose 5-phosphate + D-glyceraldehyde 3-phosphate + L-glutamine = pyridoxal 5'-phosphate + L-glutamate + phosphate + 3 H2O + H(+). The catalysed reaction is L-glutamine + H2O = L-glutamate + NH4(+). It participates in cofactor biosynthesis; pyridoxal 5'-phosphate biosynthesis. Catalyzes the hydrolysis of glutamine to glutamate and ammonia as part of the biosynthesis of pyridoxal 5'-phosphate. The resulting ammonia molecule is channeled to the active site of PdxS. This Natronomonas pharaonis (strain ATCC 35678 / DSM 2160 / CIP 103997 / JCM 8858 / NBRC 14720 / NCIMB 2260 / Gabara) (Halobacterium pharaonis) protein is Pyridoxal 5'-phosphate synthase subunit PdxT.